The primary structure comprises 428 residues: Enolase (428 aa).

Q163 serves as a coordination point for (2R)-2-phosphoglycerate. Catalysis depends on E205, which acts as the Proton donor. Mg(2+) is bound by residues D242, E285, and D311. 4 residues coordinate (2R)-2-phosphoglycerate: K336, R365, S366, and K387. The active-site Proton acceptor is the K336.

The protein belongs to the enolase family. Mg(2+) is required as a cofactor.

It is found in the cytoplasm. It localises to the secreted. The protein resides in the cell surface. It catalyses the reaction (2R)-2-phosphoglycerate = phosphoenolpyruvate + H2O. Its pathway is carbohydrate degradation; glycolysis; pyruvate from D-glyceraldehyde 3-phosphate: step 4/5. Its function is as follows. Catalyzes the reversible conversion of 2-phosphoglycerate (2-PG) into phosphoenolpyruvate (PEP). It is essential for the degradation of carbohydrates via glycolysis. This is Enolase from Desulfatibacillum aliphaticivorans.